A 170-amino-acid polypeptide reads, in one-letter code: Group 2 truncated hemoglobin 3-1 (170 aa).

Residue H98 participates in heme b binding.

Belongs to the truncated hemoglobin family. Group II subfamily. In terms of assembly, homodimer when ferric.

Its function is as follows. Hemoglobin-like protein that exhibits an unusual concentration-independent binding of O(2) and CO. Required for general plant development and during nodulation. May promote shoot organogenesis from root explants. This chain is Group 2 truncated hemoglobin 3-1, found in Medicago truncatula (Barrel medic).